Here is a 165-residue protein sequence, read N- to C-terminus: RxLR effector protein PITG_09218 (165 aa).

The N-terminal stretch at 1–24 is a signal peptide; the sequence is MRFSAFLTLLLVAFVASCSTFASA. Residues 31 to 57 carry the RxLR-dEER motif; that stretch reads RRLRADAAPVPVNKDNVAKLAGGFLEK. The chain crosses the membrane as a helical span at residues 129-149; the sequence is VTLGATVAGFAIYGAYKALFD.

It belongs to the RxLR effector family.

It localises to the secreted. The protein resides in the host mitochondrion membrane. It is found in the host endoplasmic reticulum membrane. Effector that enhances P.infestans colonization of Nicotiana benthamiana leaves. The protein is RxLR effector protein PITG_09218 of Phytophthora infestans (strain T30-4) (Potato late blight agent).